Here is a 318-residue protein sequence, read N- to C-terminus: Olfactory receptor 10H1 (318 aa).

Over 1–25 (MQRANHSTVTQFILVGFSVFPHLQL) the chain is Extracellular. The N-linked (GlcNAc...) asparagine glycan is linked to Asn5. A helical transmembrane segment spans residues 26-46 (MLFLLFLLMYLFTLLGNLLIM). The Cytoplasmic segment spans residues 47-54 (ATVWSERS). The helical transmembrane segment at 55 to 75 (LHTPMYLFLCALSVSEILYTV) threads the bilayer. The Extracellular segment spans residues 76–99 (AIIPRMLADLLSTQRSIAFLACAS). A disulfide bond links Cys97 and Cys189. A helical transmembrane segment spans residues 100 to 120 (QMFFSFSFGFTHSFLLTVMGY). Over 121-139 (DRYVAICHPLRYNVLMSPR) the chain is Cytoplasmic. The chain crosses the membrane as a helical span at residues 140–160 (GCACLVGCSWAGGLVMGMVVT). The Extracellular portion of the chain corresponds to 161–197 (SAIFHLAFCGHKEIHHFACHVPPLLKLACGDDVLVVA). The helical transmembrane segment at 198–218 (KGVGLVCITALLGCFLLILLS) threads the bilayer. At 219–238 (YAFIVAAILKIPSAEGRNKA) the chain is on the cytoplasmic side. Residues 239 to 259 (FSTCASHLTVVVVHYGFASVI) form a helical membrane-spanning segment. The Extracellular portion of the chain corresponds to 260–272 (YLKPKSPQSLEGD). The chain crosses the membrane as a helical span at residues 273–293 (TLMGITYTVLTPFLSPIIFSL). Residues 294–318 (RNKELKVAMKKTFFSKLYPEKNVMM) are Cytoplasmic-facing.

The protein belongs to the G-protein coupled receptor 1 family.

It is found in the cell membrane. Its function is as follows. Odorant receptor. This chain is Olfactory receptor 10H1 (OR10H1), found in Homo sapiens (Human).